Here is a 145-residue protein sequence, read N- to C-terminus: uncharacterized protein (145 aa).

The first 26 residues, 1–26 (MAILLPLKSILPWCCITFSFLLSSSG), serve as a signal peptide directing secretion.

This is an uncharacterized protein from Saccharomyces cerevisiae (strain ATCC 204508 / S288c) (Baker's yeast).